Consider the following 696-residue polypeptide: D-(-)-3-hydroxybutyrate oligomer hydrolase (696 aa).

An N-terminal signal peptide occupies residues 1 to 20 (MTRLGWGRRMVFGAALAAVA). The Charge relay system role is filled by serine 309.

It belongs to the D-(-)-3-hydroxybutyrate oligomer hydrolase family.

It is found in the secreted. The catalysed reaction is (3R)-hydroxybutanoate dimer + H2O = 2 (R)-3-hydroxybutanoate + H(+). Its pathway is lipid metabolism; butanoate metabolism. In terms of biological role, participates in the degradation of poly-3-hydroxybutyrate (PHB). It works downstream of poly(3-hydroxybutyrate) depolymerase, hydrolyzing D(-)-3-hydroxybutyrate oligomers of various length (3HB-oligomers) into 3HB-monomers. In Burkholderia lata (strain ATCC 17760 / DSM 23089 / LMG 22485 / NCIMB 9086 / R18194 / 383), this protein is D-(-)-3-hydroxybutyrate oligomer hydrolase.